The sequence spans 748 residues: Transcription factor FBD3 (748 aa).

Positions 1–10 (MPEQPRRPSD) are enriched in basic and acidic residues. The tract at residues 1-26 (MPEQPRRPSDQEQNQSETGPPTNKRR) is disordered. Over residues 11-21 (QEQNQSETGPP) the composition is skewed to polar residues. The segment at residues 32–59 (CNACRSRKSRCDGQRPSCSSCLSLGFDC) is a DNA-binding region (zn(2)-C6 fungal-type). 2 disordered regions span residues 116–160 (GTIN…EGIP) and 417–438 (IPDE…TSGN). Positions 131–141 (APTKASAPSGA) are enriched in low complexity. Residues 429–438 (SGRSPATSGN) are compositionally biased toward polar residues.

It is found in the nucleus. In terms of biological role, transcription factor; part of the Fusarium detoxification of benzoxazolinone cluster 2 (FDB2) involved in the degradation of benzoxazolinones produced by the host plant. Maize, wheat, and rye produce the 2 benzoxazinone phytoanticipins 2,4-dihy-droxy-7-methoxy-1,4-benzoxazin-3-one (DIMBOA) and 2,4-dihydroxy-1,4-benzoxazin-3-one (DIBOA) that, due to their inherent instability once released, spontaneously degrade to the more stable corresponding benzoxazolinones, 6-methoxy-2-benzoxazolinone (MBOA) and 2-benzoxazolinone (BOA), respectively. FDB3 is not essentiel, but contributes to efficient BOA biotransformation. In Gibberella moniliformis (strain M3125 / FGSC 7600) (Maize ear and stalk rot fungus), this protein is Transcription factor FBD3.